The following is a 520-amino-acid chain: Laccase (520 aa).

The N-terminal stretch at 1–21 (MSRFQSLLAFVVASLAAVAHA) is a signal peptide. Plastocyanin-like domains are found at residues 23–148 (IGPT…FVVY) and 160–302 (VDND…ILRY). N-linked (GlcNAc...) asparagine glycosylation is found at N72 and N75. The Cu cation site is built by H85, H87, H130, and H132. 2 cysteine pairs are disulfide-bonded: C106/C509 and C138/C226. 3 N-linked (GlcNAc...) asparagine glycosylation sites follow: N210, N229, and N354. A Plastocyanin-like 3 domain is found at 369 to 491 (TVPVLLQIIS…AGFAVVFAED (123 aa)). Cu cation contacts are provided by H416, H419, H421, H473, C474, H475, and H479.

It belongs to the multicopper oxidase family. Requires Cu cation as cofactor.

The protein localises to the secreted. The catalysed reaction is 4 hydroquinone + O2 = 4 benzosemiquinone + 2 H2O. Lignin degradation and detoxification of lignin-derived products. Has activity towards guaiacol. This chain is Laccase, found in Trametes hirsuta (White-rot fungus).